A 147-amino-acid chain; its full sequence is Endoribonuclease YbeY (147 aa).

Zn(2+)-binding residues include histidine 109, histidine 113, and histidine 119.

It belongs to the endoribonuclease YbeY family. Zn(2+) serves as cofactor.

Its subcellular location is the cytoplasm. In terms of biological role, single strand-specific metallo-endoribonuclease involved in late-stage 70S ribosome quality control and in maturation of the 3' terminus of the 16S rRNA. This Magnetococcus marinus (strain ATCC BAA-1437 / JCM 17883 / MC-1) protein is Endoribonuclease YbeY.